The primary structure comprises 280 residues: Probable aquaporin PIP2-8 (280 aa).

Residues methionine 1–proline 21 form a disordered region. The next 2 membrane-spanning stretches (helical) occupy residues alanine 36–isoleucine 56 and leucine 70–glycine 92. Residues asparagine 96 to alanine 98 carry the NPA 1 motif. The next 3 membrane-spanning stretches (helical) occupy residues arginine 113–methionine 135, serine 156–phenylalanine 176, and valine 192–isoleucine 212. An NPA 2 motif is present at residues asparagine 218–alanine 220. Residues alanine 236 to isoleucine 256 traverse the membrane as a helical segment.

It belongs to the MIP/aquaporin (TC 1.A.8) family. PIP (TC 1.A.8.11) subfamily. As to expression, expressed in leaves and at lower levels in roots.

The protein resides in the cell membrane. Its function is as follows. Aquaporins facilitate the transport of water and small neutral solutes across cell membranes. The polypeptide is Probable aquaporin PIP2-8 (PIP2-8) (Oryza sativa subsp. japonica (Rice)).